A 253-amino-acid chain; its full sequence is Aspartic acid-rich protein (253 aa).

A signal peptide spans 1–22 (MYLFIYIFFFFFFFFFFVIVQK). The interval 211 to 253 (DDFDEEFDDDDDDDDDDDDDDDDDDKDDDLDGDDDGNNDDNDD) is disordered.

It belongs to the nucleosome assembly protein (NAP) family.

The chain is Aspartic acid-rich protein from Plasmodium falciparum (isolate fcm17 / Senegal).